The following is a 730-amino-acid chain: Transcription factor verF (730 aa).

The C2H2-type 1 zinc finger occupies 19-41; sequence YECSLCLKRYKRREHLFRHIGSH. A C2H2-type 2; atypical zinc finger spans residues 47-69; sequence YQCNSCDGAFQRADVLKRHLRTC. The zn(2)-C6 fungal-type DNA-binding region spans 83–109; sequence CDRCVRQKKACSSHQPCHSCAKKGAQC. A compositionally biased stretch (polar residues) spans 120-129; sequence RLSQHSSTNH. The tract at residues 120-151 is disordered; sequence RLSQHSSTNHTPKDQELSTQFTNPPPPPSTST.

It localises to the nucleus. Functionally, transcription factor; part of the gene cluster that mediates the biosynthesis of the neurotoxin verrucosidin, a methylated alpha-pyrone polyketide that inhibits oxidative phosphorylation in mitochondria and thereby causes neurological diseases. The polypeptide is Transcription factor verF (Penicillium polonicum).